The following is a 238-amino-acid chain: 14-3-3 protein 2 (238 aa).

This sequence belongs to the 14-3-3 family.

In terms of biological role, probable adapter protein. The polypeptide is 14-3-3 protein 2 (Entamoeba histolytica (strain ATCC 30459 / HM-1:IMSS / ABRM)).